The following is a 415-amino-acid chain: Adenosylhomocysteinase (415 aa).

Positions 53, 124, and 147 each coordinate substrate. 148–150 contacts NAD(+); it reads TTT. Positions 177 and 181 each coordinate substrate. NAD(+) contacts are provided by residues asparagine 182, 211–216, glutamate 234, asparagine 269, 290–292, and asparagine 337; these read GYGWVG and SGH.

This sequence belongs to the adenosylhomocysteinase family. Requires NAD(+) as cofactor.

It is found in the cytoplasm. The catalysed reaction is S-adenosyl-L-homocysteine + H2O = L-homocysteine + adenosine. Its pathway is amino-acid biosynthesis; L-homocysteine biosynthesis; L-homocysteine from S-adenosyl-L-homocysteine: step 1/1. Functionally, may play a key role in the regulation of the intracellular concentration of adenosylhomocysteine. The sequence is that of Adenosylhomocysteinase from Sulfurisphaera tokodaii (strain DSM 16993 / JCM 10545 / NBRC 100140 / 7) (Sulfolobus tokodaii).